The primary structure comprises 267 residues: Phosphatidylglycerol--prolipoprotein diacylglyceryl transferase (267 aa).

Helical transmembrane passes span 21-41 (VSLH…YWLG), 60-80 (LLFN…VFFY), and 95-115 (IWEG…AMLW). An a 1,2-diacyl-sn-glycero-3-phospho-(1'-sn-glycerol)-binding site is contributed by Arg143. 2 helical membrane passes run 203-223 (GSVA…VEYF) and 240-260 (GQLL…VAYY).

It belongs to the Lgt family.

The protein localises to the cell inner membrane. The enzyme catalyses L-cysteinyl-[prolipoprotein] + a 1,2-diacyl-sn-glycero-3-phospho-(1'-sn-glycerol) = an S-1,2-diacyl-sn-glyceryl-L-cysteinyl-[prolipoprotein] + sn-glycerol 1-phosphate + H(+). It participates in protein modification; lipoprotein biosynthesis (diacylglyceryl transfer). Its function is as follows. Catalyzes the transfer of the diacylglyceryl group from phosphatidylglycerol to the sulfhydryl group of the N-terminal cysteine of a prolipoprotein, the first step in the formation of mature lipoproteins. The chain is Phosphatidylglycerol--prolipoprotein diacylglyceryl transferase from Glaesserella parasuis serovar 5 (strain SH0165) (Haemophilus parasuis).